A 33-amino-acid polypeptide reads, in one-letter code: Brevinin-2Rh (33 aa).

Residues C27 and C33 are joined by a disulfide bond.

In terms of tissue distribution, expressed by the skin glands.

It localises to the secreted. Antimicrobial peptide. The protein is Brevinin-2Rh of Pelophylax ridibundus (Marsh frog).